Consider the following 650-residue polypeptide: Threonine--tRNA ligase (650 aa).

The TGS domain occupies 3-65 (DLVKVTLPDG…ERDARLEIVT (63 aa)). Residues 248-548 (DHRRLGPQLG…LVEHYAGAFP (301 aa)) are catalytic. Positions 349, 400, and 525 each coordinate Zn(2+).

The protein belongs to the class-II aminoacyl-tRNA synthetase family. Homodimer. The cofactor is Zn(2+).

The protein resides in the cytoplasm. It catalyses the reaction tRNA(Thr) + L-threonine + ATP = L-threonyl-tRNA(Thr) + AMP + diphosphate + H(+). Catalyzes the attachment of threonine to tRNA(Thr) in a two-step reaction: L-threonine is first activated by ATP to form Thr-AMP and then transferred to the acceptor end of tRNA(Thr). Also edits incorrectly charged L-seryl-tRNA(Thr). The chain is Threonine--tRNA ligase from Anaeromyxobacter dehalogenans (strain 2CP-1 / ATCC BAA-258).